The chain runs to 137 residues: Golgin subfamily A member 7 (137 aa).

2 S-palmitoyl cysteine lipidation sites follow: C69 and C72.

Belongs to the ERF4 family. In terms of assembly, interacts with ZDHHC9.

It localises to the golgi apparatus membrane. Its function is as follows. May be involved in protein transport from Golgi to cell surface. The ZDHHC9-GOLGA7 complex is a palmitoyltransferase specific for HRAS and NRAS. This is Golgin subfamily A member 7 (GOLGA7) from Gallus gallus (Chicken).